The primary structure comprises 97 residues: F-actin-capping protein subunit beta (97 aa).

Disordered regions lie at residues 1–27 (RLPPQQIEKSPWSNKYDPPLEDGAMPS) and 43–66 (KSGSGTMNLGGSLTRQMEKDETVS). A compositionally biased stretch (polar residues) spans 43–57 (KSGSGTMNLGGSLTR). The residue at position 97 (lysine 97) is an N6-acetyllysine.

This sequence belongs to the F-actin-capping protein beta subunit family. As to quaternary structure, component of the F-actin capping complex, composed of a heterodimer of an alpha and a beta subunit. Subunit of dynactin, a multiprotein complex part of a tripartite complex with dynein and a adapter, such as BICDL1, BICD2 or HOOK3. The dynactin complex is built around ACTR1A/ACTB filament and consists of an actin-related filament composed of a shoulder domain, a pointed end and a barbed end. Its length is defined by its flexible shoulder domain. The soulder is composed of 2 DCTN1 subunits, 4 DCTN2 and 2 DCTN3. The 4 DCNT2 (via N-terminus) bind the ACTR1A filament and act as molecular rulers to determine the length. The pointed end is important for binding dynein-dynactin cargo adapters. Consists of 4 subunits: ACTR10, DCNT4, DCTN5 and DCTN6. The barbed end is composed of a CAPZA1:CAPZB heterodimers, which binds ACTR1A/ACTB filament and dynactin and stabilizes dynactin. Interacts with ARHGAP17. Interaction with RCSD1/CAPZIP. Component of the WASH complex, composed of F-actin-capping protein subunit alpha (CAPZA1, CAPZA2 or CAPZA3), F-actin-capping protein subunit beta (CAPZB), WASH (WASHC1, WASH2P, WASH3P, WASH4P, WASH5P or WASH6P), WASHC2 (WASHC2A or WASHC2C), WASHC3, WASHC4 and WASHC5. Interacts with ACTG1. Directly interacts with CRACD; this interaction decreases binding to actin.

It localises to the cytoplasm. Its subcellular location is the cytoskeleton. The protein localises to the myofibril. It is found in the sarcomere. Functionally, F-actin-capping proteins bind in a Ca(2+)-independent manner to the fast growing ends of actin filaments (barbed end) thereby blocking the exchange of subunits at these ends. Unlike other capping proteins (such as gelsolin and severin), these proteins do not sever actin filaments. Plays a role in the regulation of cell morphology and cytoskeletal organization. Forms, with CAPZB, the barbed end of the fast growing ends of actin filaments in the dynactin complex and stabilizes dynactin structure. The dynactin multiprotein complex activates the molecular motor dynein for ultra-processive transport along microtubules. The chain is F-actin-capping protein subunit beta from Mesocricetus auratus (Golden hamster).